A 225-amino-acid chain; its full sequence is Leucyl/phenylalanyl-tRNA--protein transferase (225 aa).

It belongs to the L/F-transferase family.

The protein localises to the cytoplasm. The catalysed reaction is N-terminal L-lysyl-[protein] + L-leucyl-tRNA(Leu) = N-terminal L-leucyl-L-lysyl-[protein] + tRNA(Leu) + H(+). It carries out the reaction N-terminal L-arginyl-[protein] + L-leucyl-tRNA(Leu) = N-terminal L-leucyl-L-arginyl-[protein] + tRNA(Leu) + H(+). It catalyses the reaction L-phenylalanyl-tRNA(Phe) + an N-terminal L-alpha-aminoacyl-[protein] = an N-terminal L-phenylalanyl-L-alpha-aminoacyl-[protein] + tRNA(Phe). Its function is as follows. Functions in the N-end rule pathway of protein degradation where it conjugates Leu, Phe and, less efficiently, Met from aminoacyl-tRNAs to the N-termini of proteins containing an N-terminal arginine or lysine. The protein is Leucyl/phenylalanyl-tRNA--protein transferase of Rhodopseudomonas palustris (strain TIE-1).